The following is a 151-amino-acid chain: Caveolin-3 (151 aa).

The Cytoplasmic segment spans residues 1 to 83; that stretch reads MMAEEHTDLE…RLLSTLLGVP (83 aa). Lys-38 is covalently cross-linked (Glycyl lysine isopeptide (Lys-Gly) (interchain with G-Cter in SUMO3)). The required for interaction with DAG1 stretch occupies residues 64–114; it reads TFTVSKYWCYRLLSTLLGVPLALLWGFLFACISFCHIWAVVPCIKSYLIEI. An intramembrane region (helical) is located at residues 84–104; sequence LALLWGFLFACISFCHIWAVV. Residues 105–151 lie on the Cytoplasmic side of the membrane; the sequence is PCIKSYLIEIQCISHIYSLCIRTFCNPLFAALGQVCSSIKVVLRKEV.

It belongs to the caveolin family. Homooligomer. Interacts with DLG1 and KCNA5; forms a ternary complex. Interacts with TRIM72. Interacts with MUSK; may regulate MUSK signaling. Interacts with DAG1 (via its C-terminal); the interaction prevents binding of DAG1 with DMD. Interacts with DYSF. Interacts with POPDC1. Interacts with CAVIN1 and CAVIN2. Interacts with CAVIN4. Post-translationally, sumoylation with SUMO3 by PIAS4 may reduce agonist-induced internalization and desensitization of adrenergic receptor ABRD2. As to expression, expressed predominantly in muscle.

The protein localises to the golgi apparatus membrane. It localises to the cell membrane. It is found in the membrane. The protein resides in the caveola. Its subcellular location is the sarcolemma. Functionally, may act as a scaffolding protein within caveolar membranes. Interacts directly with G-protein alpha subunits and can functionally regulate their activity. May also regulate voltage-gated potassium channels. Plays a role in the sarcolemma repair mechanism of both skeletal muscle and cardiomyocytes that permits rapid resealing of membranes disrupted by mechanical stress. Mediates the recruitment of CAVIN2 and CAVIN3 proteins to the caveolae. The chain is Caveolin-3 (CAV3) from Homo sapiens (Human).